Reading from the N-terminus, the 439-residue chain is Protein dumpy-20 (439 aa).

The segment at 93–116 (GTLSDPSLHGSNSSSSTSDVGSSV) is disordered. The segment covering 96 to 116 (SDPSLHGSNSSSSTSDVGSSV) has biased composition (low complexity). BED-type zinc fingers lie at residues 135-184 (PTEN…YQKV) and 349-398 (KTEH…YNDV). Residues Cys-154, Cys-157, His-172, His-177, Cys-368, Cys-371, His-386, and His-391 each contribute to the Zn(2+) site.

Its function is as follows. Involved in cuticle function and is essential for normal morphological development. The chain is Protein dumpy-20 (dpy-20) from Caenorhabditis briggsae.